A 144-amino-acid chain; its full sequence is MRLNTLSPANGARHSRKRLGRGIGSGFGKTSGRGHKGQKSRSGSSIRRGFEGGQMPLYRRLPKFGFNSRKKNITTEVRLSDLSNLSTNIIDLNVLKQENIIKKNIKYAKIILSGKLTVPLIIRGLLVSKGARSEIENTGGKVEG.

Positions 1-52 are disordered; that stretch reads MRLNTLSPANGARHSRKRLGRGIGSGFGKTSGRGHKGQKSRSGSSIRRGFEG. Gly residues predominate over residues 21–31; that stretch reads RGIGSGFGKTS.

It belongs to the universal ribosomal protein uL15 family. As to quaternary structure, part of the 50S ribosomal subunit.

Binds to the 23S rRNA. This is Large ribosomal subunit protein uL15 from Buchnera aphidicola subsp. Acyrthosiphon pisum (strain 5A).